The primary structure comprises 237 residues: Cysteine-rich venom protein tigrin (237 aa).

Residues 1–18 form the signal peptide; that stretch reads MIVFILLSLAAVLRQSFG. Residues 37-165 enclose the SCP domain; sequence VNIHNSFRRS…LYNYFYVCQY (129 aa). Disulfide bonds link C74/C152, C91/C166, C147/C163, C185/C192, C188/C197, C201/C232, C210/C226, and C217/C230. A ShKT domain is found at 201-232; the sequence is CTHKDDYNNCNSLVSDCQSDWDKSHCPATCFC.

Belongs to the CRISP family. As to expression, expressed by the venom gland.

Its subcellular location is the secreted. In terms of biological role, this protein does not inhibit smooth muscle contraction elicited by high potassium levels or caffeine. This chain is Cysteine-rich venom protein tigrin, found in Rhabdophis tigrinus tigrinus (Tiger keelback snake).